Consider the following 426-residue polypeptide: Glucan 1,3-beta-glucosidase (426 aa).

Residues 1-20 (MLYPRALLPAAVALASLVLA) form the signal peptide. The Proton donor role is filled by E208. Intrachain disulfides connect C290–C416 and C315–C343. E307 acts as the Nucleophile in catalysis.

It belongs to the glycosyl hydrolase 5 (cellulase A) family.

It localises to the secreted. It catalyses the reaction Successive hydrolysis of beta-D-glucose units from the non-reducing ends of (1-&gt;3)-beta-D-glucans, releasing alpha-glucose.. Beta-glucanases participate in the metabolism of beta-glucan, the main structural component of the cell wall. It could also function biosynthetically as a transglycosylase. The protein is Glucan 1,3-beta-glucosidase of Blumeria graminis (Powdery mildew).